A 798-amino-acid chain; its full sequence is Interphotoreceptor matrix proteoglycan 1 (798 aa).

A signal peptide spans 1 to 20; the sequence is MNLEIKHAILVLWIFLQVQG. N142 carries an N-linked (GlcNAc...) asparagine glycan. Positions 238–360 constitute an SEA 1 domain; that stretch reads SEEKVEFSIS…PEAYLTAADL (123 aa). O-linked (GalNAc...) threonine glycans are attached at residues T442 and T445. The 114-residue stretch at 574 to 687 folds into the SEA 2 domain; sequence HELVVFFSLR…YSLDIEPADQ (114 aa). N-linked (GlcNAc...) asparagine glycosylation is found at N595 and N619. The short motif at 624–632 is the Heparin- and hyaluronan-binding element; it reads KQLEILSFR. 2 N-linked (GlcNAc...) asparagine glycosylation sites follow: N633 and N651. Residues 741-798 are disordered; it reads ASQGQATPCRPPDHSTNQARQPSVKKLQRQQNKVVKKRNSELSATDFEELDDQDWEGN. Residues 786-798 show a composition bias toward acidic residues; that stretch reads DFEELDDQDWEGN.

In terms of processing, highly glycosylated (N- and O-linked carbohydrates and sialic acid).

The protein localises to the cell projection. The protein resides in the cilium. It is found in the photoreceptor outer segment. Its subcellular location is the secreted. It localises to the extracellular space. The protein localises to the extracellular matrix. The protein resides in the interphotoreceptor matrix. It is found in the photoreceptor inner segment. Chondroitin sulfate-, heparin- and hyaluronan-binding protein. May serve to form a basic macromolecular scaffold comprising the insoluble interphotoreceptor matrix. The protein is Interphotoreceptor matrix proteoglycan 1 of Rattus norvegicus (Rat).